The following is a 351-amino-acid chain: uncharacterized protein (351 aa).

The segment at 1–61 is disordered; sequence MNDKRKPSFQ…RDKQEVKETR (61 aa). Basic and acidic residues-rich tracts occupy residues 16–38 and 44–61; these read FQER…HFND and RNEK…KETR.

This sequence belongs to the class IV-like SAM-binding methyltransferase superfamily. RNA methyltransferase TrmH family.

This is an uncharacterized protein from Haemophilus influenzae (strain ATCC 51907 / DSM 11121 / KW20 / Rd).